Reading from the N-terminus, the 243-residue chain is uncharacterized protein (243 aa).

This is an uncharacterized protein from Acanthamoeba polyphaga (Amoeba).